The following is a 47-amino-acid chain: uncharacterized protein (47 aa).

The helical transmembrane segment at 28-45 (VMIWGCLPYFLYVLIRMF) threads the bilayer.

The protein localises to the cell membrane. This is an uncharacterized protein from Bacillus subtilis (strain 168).